We begin with the raw amino-acid sequence, 57 residues long: UPF0337 protein SCO0678 (57 aa).

Basic and acidic residues-rich tracts occupy residues Met-1–Ala-22 and Gly-42–His-57. Residues Met-1–His-57 form a disordered region.

This sequence belongs to the UPF0337 (CsbD) family.

The chain is UPF0337 protein SCO0678 from Streptomyces coelicolor (strain ATCC BAA-471 / A3(2) / M145).